The sequence spans 176 residues: Large ribosomal subunit protein uL10 (176 aa).

The protein belongs to the universal ribosomal protein uL10 family. In terms of assembly, part of the ribosomal stalk of the 50S ribosomal subunit. The N-terminus interacts with L11 and the large rRNA to form the base of the stalk. The C-terminus forms an elongated spine to which L12 dimers bind in a sequential fashion forming a multimeric L10(L12)X complex.

Functionally, forms part of the ribosomal stalk, playing a central role in the interaction of the ribosome with GTP-bound translation factors. The polypeptide is Large ribosomal subunit protein uL10 (Marinobacter nauticus (strain ATCC 700491 / DSM 11845 / VT8) (Marinobacter aquaeolei)).